A 565-amino-acid polypeptide reads, in one-letter code: Beta-hexosaminidase subunit beta (565 aa).

An N-terminal signal peptide occupies residues 1-13 (MIVLLLLISYCFA). A glycan (N-linked (GlcNAc...) asparagine) is linked at Asn-71. Residue Glu-347 is the Proton donor of the active site.

This sequence belongs to the glycosyl hydrolase 20 family. As to quaternary structure, heterodimer of one alpha subunit and one beta subunit. Glycosylated.

It is found in the cytoplasmic granule. The protein localises to the secreted. It catalyses the reaction Hydrolysis of terminal non-reducing N-acetyl-D-hexosamine residues in N-acetyl-beta-D-hexosaminides.. Its function is as follows. Hydrolyzes the non-reducing end N-acetyl-D-hexosamine and/or sulfated N-acetyl-D-hexosamine of glycoconjugates. May contribute to amoebic pathogenicity and may be involved in the destruction of extracellular matrix components. This Entamoeba histolytica (strain ATCC 30459 / HM-1:IMSS / ABRM) protein is Beta-hexosaminidase subunit beta.